A 239-amino-acid chain; its full sequence is Probable transcriptional regulatory protein ACL_0044 (239 aa).

Belongs to the TACO1 family.

The protein resides in the cytoplasm. The sequence is that of Probable transcriptional regulatory protein ACL_0044 from Acholeplasma laidlawii (strain PG-8A).